Here is a 465-residue protein sequence, read N- to C-terminus: Exoenzymes regulatory protein AepA (465 aa).

The first 21 residues, 1–21 (MKFNVKMLSVTLGLFTSHAFA), serve as a signal peptide directing secretion.

It belongs to the metallo-dependent hydrolases superfamily.

Its function is as follows. Involved in the control of extracellular enzymes production. Stimulates PEL, PEH, CEL, and PRT production. The polypeptide is Exoenzymes regulatory protein AepA (aepA) (Pectobacterium carotovorum subsp. carotovorum (Erwinia carotovora subsp. carotovora)).